Consider the following 1088-residue polypeptide: MGKYNLILSEYLSFIYNSQSAVQIPIYYSSNSELENRCIEFHSKCLENSKNGLSLKKLFAEYSDVIENATLLSILSYSYDKYNAVERKLVKYAKSKPLEADLTVNELDYENNKITSELFPTAEEYTDSLMDPAILTSLSSNLNAVMFWLEKHENDVAEKLKIYKRRLDLFTIVASTVNKYGVPRHNAKYRYEYEVMKDKPYYLVTWANSSIEMLMSVFSHEDYLIARELIVLSYSNRSTLAKLVSSPMSILVALVDINGTFITNEELELEFSNKYVRAIVPDQTFDELKQMLDNMRKAGLTDIPKMIQDWLVDCSIEKFPLMAKIYSWSFHVGFRKQKMLDAALDQLKTEYTEDVDDEMYREYTMLIRDEVVKMLEEPVKHDDHLLQDSELAGLLSMSSASNGESRQLKFGRKTIFSTKKNMHVMDDMANGRYTPGIIPPVNVNKPIPLGRRDVPGRRTRIIFILPYEYFIAQHAVVEKMLIYAKHTREYAEFYSQSNQLLSYGDVTRFLSNNSMVLYTDVSQWDSSQHNTQPFRKGIIMGLDMLANMTNDARVIQTLNLYKQTQINLMDSYVQIPDGNVIKKIQYGAVASGEKQTKAANSIANLALIKTVLSRISNKYSFATKIIRVDGDDNYAVLQFNTEVTKQMVQDVSNDVRETYARMNAKVKALVSTVGIEIAKRYIAGGKIFFRAGINLLNNEKRGQSTQWDQAAVLYSNYIVNRLRGFETDREFILTKIMQMTSVAITGSLRLFPSERVLTTNSTFKVFDSEDFIIEYGTTDDEVYIQRAFMSLSSQKSGIADEIAASSTFKNYVSRLSEQLLFSKNNIVSRGIALTEKAKLNSYAPISLEKRRAQISALLTMLQKPVTFKSSKITINDILRDIKPFFTVSEAHLSIQYQKFMPTLPDNVQYIIQCIGSRTYQIEDDGSKSAISRLISKYSVYRPSIEELYKVISLHENEIQLYLISLGIPKIDADTYVGSKIYSQDKYRILESYVYNLLSINYGCYQLFDFNSPDLEKLIRIPFKGKIPAVTFILHLYAKLEVINHAIKNGSWISLFCNYPKSEMIKLWKKMWNITSLRSPYTNANFFQD.

The 187-residue stretch at 501–687 (LSYGDVTRFL…AKRYIAGGKI (187 aa)) folds into the RdRp catalytic domain.

The protein belongs to the reoviridae RNA-directed RNA polymerase family. In terms of assembly, interacts with VP3 (Potential). Interacts with VP2; this interaction activates VP1. Interacts with NSP5; this interaction is probably necessary for the formation of functional virus factories. Interacts with NSP2; this interaction is weak. Mg(2+) is required as a cofactor.

It localises to the virion. It catalyses the reaction RNA(n) + a ribonucleoside 5'-triphosphate = RNA(n+1) + diphosphate. In terms of biological role, RNA-directed RNA polymerase that is involved in both transcription and genome replication. Together with VP3 capping enzyme, forms an enzyme complex positioned near the channels situated at each of the five-fold vertices of the core. Following infection, the outermost layer of the virus is lost, leaving a double-layered particle (DLP) made up of the core and VP6 shell. VP1 then catalyzes the transcription of fully conservative plus-strand genomic RNAs that are extruded through the DLP's channels into the cytoplasm where they function as mRNAs for translation of viral proteins. One copy of each of the viral (+)RNAs is also recruited during core assembly, together with newly synthesized polymerase complexes and VP2. The polymerase of these novo-formed particles catalyzes the synthesis of complementary minus-strands leading to dsRNA formation. To do so, the polymerase specifically recognizes and binds 4 bases 5'-UGUG-3' in the conserved 3'-sequence of plus-strand RNA templates. VP2 presumably activates the autoinhibited VP1-RNA complex to coordinate packaging and genome replication. Once dsRNA synthesis is complete, the polymerase switches to the transcriptional mode, thus providing secondary transcription. This chain is RNA-directed RNA polymerase, found in Rotavirus A (strain RVA/Cow/United States/NCDV-Lincoln/1969/G6P6[1]) (RV-A).